A 176-amino-acid polypeptide reads, in one-letter code: Nuclear transcription factor Y subunit B-10 (176 aa).

The segment covering 1 to 15 has biased composition (gly residues); that stretch reads MAESQTGGGGGGSHE. The segment at 1 to 29 is disordered; that stretch reads MAESQTGGGGGGSHESGGDQSPRSLNVRE. Ala-2 carries the post-translational modification N-acetylalanine. The DNA-binding element occupies 34–40; it reads LPIANIS. Residues 61–72 are subunit association domain (SAD); that stretch reads MQECVSEFISFV. Positions 121 to 176 are disordered; that stretch reads GDTKGSGKGGESSAKRDGQPSQVSQFSQVPQQGSFSQGPYGNSQGSNMMVQMPGTE. The span at 139 to 159 shows a compositional bias: low complexity; sequence QPSQVSQFSQVPQQGSFSQGP. Over residues 160–169 the composition is skewed to polar residues; the sequence is YGNSQGSNMM.

It belongs to the NFYB/HAP3 subunit family. Heterotrimeric transcription factor composed of three components, NF-YA, NF-YB and NF-YC. NF-YB and NF-YC must interact and dimerize for NF-YA association and DNA binding. Expressed in the whole plant, except roots.

It localises to the nucleus. In terms of biological role, component of the NF-Y/HAP transcription factor complex. The NF-Y complex stimulates the transcription of various genes by recognizing and binding to a CCAAT motif in promoters. This Arabidopsis thaliana (Mouse-ear cress) protein is Nuclear transcription factor Y subunit B-10 (NFYB10).